Here is a 293-residue protein sequence, read N- to C-terminus: Acetylglutamate kinase (293 aa).

Substrate is bound by residues 70-71 (GG), R92, and N186.

The protein belongs to the acetylglutamate kinase family. ArgB subfamily.

It is found in the cytoplasm. The catalysed reaction is N-acetyl-L-glutamate + ATP = N-acetyl-L-glutamyl 5-phosphate + ADP. It participates in amino-acid biosynthesis; L-arginine biosynthesis; N(2)-acetyl-L-ornithine from L-glutamate: step 2/4. In terms of biological role, catalyzes the ATP-dependent phosphorylation of N-acetyl-L-glutamate. This Synechococcus sp. (strain CC9605) protein is Acetylglutamate kinase.